Here is a 244-residue protein sequence, read N- to C-terminus: GTP cyclohydrolase 1 type 2 homolog (244 aa).

5 residues coordinate a divalent metal cation: His65, His66, Asp102, His216, and Glu220.

It belongs to the GTP cyclohydrolase I type 2/NIF3 family. Homohexamer; trimer of dimers, that forms a hollow cage-like architecture.

DNA-binding protein exhibiting the ability to bind to both single-stranded and double-stranded DNA. The chain is GTP cyclohydrolase 1 type 2 homolog from Methanocaldococcus jannaschii (strain ATCC 43067 / DSM 2661 / JAL-1 / JCM 10045 / NBRC 100440) (Methanococcus jannaschii).